Consider the following 383-residue polypeptide: Pentatricopeptide repeat-containing protein 2, mitochondrial (383 aa).

One copy of the PPR repeat lies at 161–195 (TSFNILMDMLFIKGKYKSALEVLIEMKNQNVKFTT). Ser-377 carries the post-translational modification Phosphoserine.

It belongs to the PTCD2 family.

It is found in the mitochondrion. Its function is as follows. Involved in mitochondrial RNA maturation and mitochondrial respiratory chain function. In Pongo abelii (Sumatran orangutan), this protein is Pentatricopeptide repeat-containing protein 2, mitochondrial (PTCD2).